Consider the following 701-residue polypeptide: Polyribonucleotide nucleotidyltransferase (701 aa).

2 residues coordinate Mg(2+): aspartate 485 and aspartate 491. Positions 552 to 611 constitute a KH domain; it reads PKIFKTTVDPEKIRDIIGPGGKMINKIIAKTNVKIDIEPDGRIFVAAPDDISGNRAISMI. One can recognise an S1 motif domain in the interval 621 to 689; that stretch reads GQFFLGKVTR…RLGRIALSRK (69 aa).

It belongs to the polyribonucleotide nucleotidyltransferase family. Requires Mg(2+) as cofactor.

It is found in the cytoplasm. The enzyme catalyses RNA(n+1) + phosphate = RNA(n) + a ribonucleoside 5'-diphosphate. Functionally, involved in mRNA degradation. Catalyzes the phosphorolysis of single-stranded polyribonucleotides processively in the 3'- to 5'-direction. In Caldicellulosiruptor saccharolyticus (strain ATCC 43494 / DSM 8903 / Tp8T 6331), this protein is Polyribonucleotide nucleotidyltransferase.